Reading from the N-terminus, the 344-residue chain is Cyclin-G2 (344 aa).

Residues 301–313 (ESESEDSCEDMSC) are compositionally biased toward acidic residues. Residues 301–320 (ESESEDSCEDMSCGEESLSS) are disordered.

The protein belongs to the cyclin family. Cyclin G subfamily. High levels in cerebellum, thymus, spleen and prostate. Low levels in skeletal muscle.

Its subcellular location is the cytoplasm. May play a role in growth regulation and in negative regulation of cell cycle progression. The protein is Cyclin-G2 (CCNG2) of Homo sapiens (Human).